The chain runs to 538 residues: Phosphoenolpyruvate carboxykinase (ATP) (538 aa).

Substrate-binding residues include arginine 64, tyrosine 205, and lysine 211. Residues lysine 211, histidine 230, and glycine 246–threonine 254 each bind ATP. 2 residues coordinate Mn(2+): lysine 211 and histidine 230. Aspartate 267 serves as a coordination point for Mn(2+). ATP contacts are provided by residues glutamate 295, arginine 331, arginine 447–isoleucine 448, and threonine 453. Arginine 331 is a binding site for substrate.

This sequence belongs to the phosphoenolpyruvate carboxykinase (ATP) family. Monomer. Requires Mn(2+) as cofactor.

It is found in the cytoplasm. It carries out the reaction oxaloacetate + ATP = phosphoenolpyruvate + ADP + CO2. The protein operates within carbohydrate biosynthesis; gluconeogenesis. Functionally, involved in the gluconeogenesis. Catalyzes the conversion of oxaloacetate (OAA) to phosphoenolpyruvate (PEP) through direct phosphoryl transfer between the nucleoside triphosphate and OAA. This is Phosphoenolpyruvate carboxykinase (ATP) from Haemophilus influenzae (strain ATCC 51907 / DSM 11121 / KW20 / Rd).